Reading from the N-terminus, the 426-residue chain is Cephalotocin receptor 2 (426 aa).

The Extracellular segment spans residues 1–51; the sequence is MYQAMEVESTSPSGFFLDFYTQSTIPTTDFLNNTNSSHPIRDEKLVKIEIA. N-linked (GlcNAc...) asparagine glycans are attached at residues Asn32 and Asn35. A helical transmembrane segment spans residues 52-72; it reads VLGTCFTLAIINNLCVLLVLL. Topologically, residues 73–84 are cytoplasmic; it reads WRRKKVRRMQMF. A helical membrane pass occupies residues 85 to 105; that stretch reads ILHLSIADLIVAFFNILPQLI. Residues 106-120 lie on the Extracellular side of the membrane; it reads WDITFRFMAGDAMCR. Cys119 and Cys198 form a disulfide bridge. A helical membrane pass occupies residues 121–141; that stretch reads FIKYAQMFSLYLSTYILIMTA. At 142 to 165 the chain is on the cytoplasmic side; sequence VDRYRAICHPLSNQTWTPCMVYCK. Residues 166 to 186 traverse the membrane as a helical segment; that stretch reads IFIAYAIATIFSIPQAILFQM. Over 187–208 the chain is Extracellular; sequence QEVNEGSGIYDCWVHFEPAWVL. The helical transmembrane segment at 209-229 threads the bilayer; it reads TAYALYIFFALYLIPILILFF. The Cytoplasmic portion of the chain corresponds to 230-288; it reads TYGSICYTIWAKYRHAIKTKKDANTRYPQRRKKKGVILRTHSVHGFSKAKLNSVKLTFA. A helical membrane pass occupies residues 289–309; sequence VIVTYIICWSPFFVSQIWWLF. The Extracellular portion of the chain corresponds to 310 to 319; sequence DETVVGNAGV. A helical membrane pass occupies residues 320-340; that stretch reads VVILLMACLNSCTNPWIYLIF. The Cytoplasmic portion of the chain corresponds to 341 to 426; it reads NRNYISNVLP…DQFIYSDKTT (86 aa). The interval 373 to 426 is disordered; it reads GSVRRDSRKTSDPKRISESRRISDARRISGKTQKNNSSSPRKTSDQFIYSDKTT. Positions 375 to 399 are enriched in basic and acidic residues; it reads VRRDSRKTSDPKRISESRRISDARR. Over residues 402 to 426 the composition is skewed to polar residues; the sequence is GKTQKNNSSSPRKTSDQFIYSDKTT.

It belongs to the G-protein coupled receptor 1 family. Vasopressin/oxytocin receptor subfamily. In terms of tissue distribution, present in various peripheral tissues with highest expression in branchia and vas deferens. Very low expression detected in nervous system.

It localises to the cell membrane. Acts as a receptor for cephalotocin. This Octopus vulgaris (Common octopus) protein is Cephalotocin receptor 2.